Consider the following 54-residue polypeptide: Large ribosomal subunit protein bL33 (54 aa).

This sequence belongs to the bacterial ribosomal protein bL33 family.

The polypeptide is Large ribosomal subunit protein bL33 (Stenotrophomonas maltophilia (strain K279a)).